Consider the following 413-residue polypeptide: Probable aminotransferase sirI (413 aa).

Lys255 carries the post-translational modification N6-(pyridoxal phosphate)lysine.

It belongs to the class-I pyridoxal-phosphate-dependent aminotransferase family. Pyridoxal 5'-phosphate serves as cofactor.

The protein operates within mycotoxin biosynthesis. Functionally, probable aminotransferase; part of the gene cluster that mediates the biosynthesis of sirodesmin PL, an epipolythiodioxopiperazine (ETP) characterized by a disulfide bridged cyclic dipeptide and that acts as a phytotoxin which is involved in the blackleg didease of canola. SirD catalyzes the O-prenylation of L-tyrosine (L-Tyr) in the presence of dimethylallyl diphosphate (DMAPP) to yield 4-O-dimethylallyl-L-Tyr, and therefore represents probably the first pathway-specific enzyme in the biosynthesis of sirodesmin PL. 4-O-dimethylallyl-L-Tyr, then undergoes condensation with L-Ser in a reaction catalyzed by the non-ribosomal peptide synthase sirP to form the diketopiperazine (DKP) backbone. Further bishydroxylation of the DKP performed by the cytochrome P450 monooxygenase sirC leads to the production of the intermediate phomamide. This step is essential to form the reactive thiol group required for toxicity of sirodesmin PL. The next steps of sirodesmin biosynthesis are not well understood yet, but some predictions could be made from intermediate compounds identification. Phomamide is converted into phomalizarine via oxidation, probably by sirT. Further oxidation, methylation (by sirM or sirN) and reduction steps convert phomalizarine to deacetyl sirodesmin. Finally, acetyltransferase sirH probably acetylates deacetyl sirodesmin to produce sirodesmin PL. This Leptosphaeria maculans (Blackleg fungus) protein is Probable aminotransferase sirI.